A 557-amino-acid chain; its full sequence is Dihydroxy-acid dehydratase (557 aa).

D78 is a binding site for Mg(2+). Position 119 (C119) interacts with [2Fe-2S] cluster. Mg(2+) contacts are provided by D120 and K121. K121 is modified (N6-carboxylysine). A [2Fe-2S] cluster-binding site is contributed by C192. A Mg(2+)-binding site is contributed by E442. The active-site Proton acceptor is the S468.

It belongs to the IlvD/Edd family. As to quaternary structure, homodimer. [2Fe-2S] cluster serves as cofactor. Requires Mg(2+) as cofactor.

It catalyses the reaction (2R)-2,3-dihydroxy-3-methylbutanoate = 3-methyl-2-oxobutanoate + H2O. The enzyme catalyses (2R,3R)-2,3-dihydroxy-3-methylpentanoate = (S)-3-methyl-2-oxopentanoate + H2O. The protein operates within amino-acid biosynthesis; L-isoleucine biosynthesis; L-isoleucine from 2-oxobutanoate: step 3/4. It participates in amino-acid biosynthesis; L-valine biosynthesis; L-valine from pyruvate: step 3/4. Its function is as follows. Functions in the biosynthesis of branched-chain amino acids. Catalyzes the dehydration of (2R,3R)-2,3-dihydroxy-3-methylpentanoate (2,3-dihydroxy-3-methylvalerate) into 2-oxo-3-methylpentanoate (2-oxo-3-methylvalerate) and of (2R)-2,3-dihydroxy-3-methylbutanoate (2,3-dihydroxyisovalerate) into 2-oxo-3-methylbutanoate (2-oxoisovalerate), the penultimate precursor to L-isoleucine and L-valine, respectively. This is Dihydroxy-acid dehydratase from Bacillus mycoides (strain KBAB4) (Bacillus weihenstephanensis).